The following is a 345-amino-acid chain: tRNA N6-adenosine threonylcarbamoyltransferase (345 aa).

Positions 111 and 115 each coordinate Fe cation. Substrate contacts are provided by residues L134–G138, D167, G180, and N276. D304 contacts Fe cation.

Belongs to the KAE1 / TsaD family. Fe(2+) is required as a cofactor.

It localises to the cytoplasm. The enzyme catalyses L-threonylcarbamoyladenylate + adenosine(37) in tRNA = N(6)-L-threonylcarbamoyladenosine(37) in tRNA + AMP + H(+). Required for the formation of a threonylcarbamoyl group on adenosine at position 37 (t(6)A37) in tRNAs that read codons beginning with adenine. Is involved in the transfer of the threonylcarbamoyl moiety of threonylcarbamoyl-AMP (TC-AMP) to the N6 group of A37, together with TsaE and TsaB. TsaD likely plays a direct catalytic role in this reaction. This Bordetella avium (strain 197N) protein is tRNA N6-adenosine threonylcarbamoyltransferase.